A 249-amino-acid polypeptide reads, in one-letter code: MERLLIVNADDFGLSKGQNYGIIEACRNGIVTSTTALVNGQAIDHAVQLSRDEPSLAIGMHFVLTMGKPLTAMPGLTRDGVLGKWIWQLAEEDALPLEEITQELASQYLRFIELFGRKPTHLDSHHHVHMFPQIFPIVARFAAEQGIALRADRQMAFDLPVNLRTTQGFSSAFYGEEISESLFLQVLDDAGHRGDRSLEVMCHPAFIDNTIRQSAYCFPRLTELDVLTSASLKGAIAQRGYRLGSYRDV.

Residues His61 and His125 each coordinate Mg(2+).

The protein belongs to the YdjC deacetylase family. ChbG subfamily. In terms of assembly, homodimer. Mg(2+) is required as a cofactor.

It is found in the cytoplasm. The catalysed reaction is N,N'-diacetylchitobiose + H2O = N-acetyl-beta-D-glucosaminyl-(1-&gt;4)-D-glucosamine + acetate. The enzyme catalyses diacetylchitobiose-6'-phosphate + H2O = N'-monoacetylchitobiose-6'-phosphate + acetate. It functions in the pathway glycan degradation; chitin degradation. In terms of biological role, involved in the degradation of chitin. ChbG is essential for growth on the acetylated chitooligosaccharides chitobiose and chitotriose but is dispensable for growth on cellobiose and chitosan dimer, the deacetylated form of chitobiose. Deacetylation of chitobiose-6-P and chitotriose-6-P is necessary for both the activation of the chb promoter by the regulatory protein ChbR and the hydrolysis of phosphorylated beta-glucosides by the phospho-beta-glucosidase ChbF. Catalyzes the removal of only one acetyl group from chitobiose-6-P to yield monoacetylchitobiose-6-P, the inducer of ChbR and the substrate of ChbF. The chain is Chitooligosaccharide deacetylase from Escherichia coli O9:H4 (strain HS).